A 113-amino-acid polypeptide reads, in one-letter code: UPF0102 protein Mfla_2283 (113 aa).

This sequence belongs to the UPF0102 family.

The sequence is that of UPF0102 protein Mfla_2283 from Methylobacillus flagellatus (strain ATCC 51484 / DSM 6875 / VKM B-1610 / KT).